Consider the following 154-residue polypeptide: Endoribonuclease YbeY (154 aa).

Zn(2+)-binding residues include H114, H118, and H124.

The protein belongs to the endoribonuclease YbeY family. The cofactor is Zn(2+).

The protein localises to the cytoplasm. Its function is as follows. Single strand-specific metallo-endoribonuclease involved in late-stage 70S ribosome quality control and in maturation of the 3' terminus of the 16S rRNA. The protein is Endoribonuclease YbeY of Aggregatibacter actinomycetemcomitans (Actinobacillus actinomycetemcomitans).